A 372-amino-acid polypeptide reads, in one-letter code: AA9 family lytic polysaccharide monooxygenase C (372 aa).

The first 16 residues, 1-16 (MFRSALFLLLAPLALS), serve as a signal peptide directing secretion. His-17 and His-99 together coordinate Cu(2+). A disulfide bond links Cys-59 and Cys-189. His-174 and Gln-184 together coordinate O2. Position 186 (Tyr-186) interacts with Cu(2+).

It belongs to the polysaccharide monooxygenase AA9 family. Cu(2+) serves as cofactor.

It is found in the secreted. The catalysed reaction is [(1-&gt;4)-beta-D-glucosyl]n+m + reduced acceptor + O2 = 4-dehydro-beta-D-glucosyl-[(1-&gt;4)-beta-D-glucosyl]n-1 + [(1-&gt;4)-beta-D-glucosyl]m + acceptor + H2O.. Functionally, lytic polysaccharide monooxygenase (LPMO) that depolymerizes crystalline and amorphous polysaccharides via the oxidation of scissile alpha- or beta-(1-4)-glycosidic bonds, yielding C1 or C4 oxidation products. Catalysis by LPMOs requires the reduction of the active-site copper from Cu(II) to Cu(I) by a reducing agent and H(2)O(2) or O(2) as a cosubstrate. The polypeptide is AA9 family lytic polysaccharide monooxygenase C (Aspergillus tamarii).